Consider the following 385-residue polypeptide: cAMP-dependent protein kinase regulatory subunit (385 aa).

The span at 1–22 shows a compositional bias: polar residues; it reads MSSTGFTSPFGNANPFGSSGRS. Disordered regions lie at residues 1-51 and 77-111; these read MSST…GVKN and DFPA…PVHP. Residues 1–128 form a dimerization and phosphorylation region; it reads MSSTGFTSPF…RLKKAISGNF (128 aa). A Phosphoserine modification is found at Ser-89. Residues 129 to 260, Glu-207, Arg-216, 261 to 378, Glu-328, and Arg-337 each bind 3',5'-cyclic AMP; these read LFNH…EEVP and ILKT…EAEE.

This sequence belongs to the cAMP-dependent kinase regulatory chain family. As to quaternary structure, tetramer, composed of 2 regulatory (R) and 2 catalytic (C) subunits. In the presence of cAMP it dissociates into 2 active monomeric C subunits and an R dimer.

The sequence is that of cAMP-dependent protein kinase regulatory subunit (mcb) from Neurospora crassa (strain ATCC 24698 / 74-OR23-1A / CBS 708.71 / DSM 1257 / FGSC 987).